A 543-amino-acid chain; its full sequence is Chaperonin GroEL (543 aa).

ATP-binding positions include 31-34 (TMGP), 88-92 (DGTTT), glycine 415, 479-481 (DAL), and aspartate 495.

Belongs to the chaperonin (HSP60) family. Forms a cylinder of 14 subunits composed of two heptameric rings stacked back-to-back. Interacts with the co-chaperonin GroES.

It is found in the cytoplasm. It catalyses the reaction ATP + H2O + a folded polypeptide = ADP + phosphate + an unfolded polypeptide.. Its function is as follows. Together with its co-chaperonin GroES, plays an essential role in assisting protein folding. The GroEL-GroES system forms a nano-cage that allows encapsulation of the non-native substrate proteins and provides a physical environment optimized to promote and accelerate protein folding. The polypeptide is Chaperonin GroEL (Clostridium tetani (strain Massachusetts / E88)).